Here is a 361-residue protein sequence, read N- to C-terminus: Chorismate synthase (361 aa).

Over residues D40–R49 the composition is skewed to basic and acidic residues. The segment at D40–R60 is disordered. R48 and R54 together coordinate NADP(+). FMN is bound by residues R125–S127, N237–A238, G277, K292–S296, and R318.

It belongs to the chorismate synthase family. Homotetramer. Requires FMNH2 as cofactor.

The catalysed reaction is 5-O-(1-carboxyvinyl)-3-phosphoshikimate = chorismate + phosphate. It participates in metabolic intermediate biosynthesis; chorismate biosynthesis; chorismate from D-erythrose 4-phosphate and phosphoenolpyruvate: step 7/7. Catalyzes the anti-1,4-elimination of the C-3 phosphate and the C-6 proR hydrogen from 5-enolpyruvylshikimate-3-phosphate (EPSP) to yield chorismate, which is the branch point compound that serves as the starting substrate for the three terminal pathways of aromatic amino acid biosynthesis. This reaction introduces a second double bond into the aromatic ring system. This chain is Chorismate synthase, found in Chromohalobacter salexigens (strain ATCC BAA-138 / DSM 3043 / CIP 106854 / NCIMB 13768 / 1H11).